A 147-amino-acid chain; its full sequence is Lysozyme C-3 (147 aa).

Residues 1 to 18 (MKALIILGFLFLSVAVQG) form the signal peptide. The C-type lysozyme domain occupies 19-147 (KVFERCELAR…VSSYVQGCTL (129 aa)). Intrachain disulfides connect cysteine 24–cysteine 145, cysteine 48–cysteine 133, cysteine 83–cysteine 99, and cysteine 95–cysteine 113. Catalysis depends on residues glutamate 53 and aspartate 71.

The protein belongs to the glycosyl hydrolase 22 family. Monomer. In terms of tissue distribution, stomach-specific.

The enzyme catalyses Hydrolysis of (1-&gt;4)-beta-linkages between N-acetylmuramic acid and N-acetyl-D-glucosamine residues in a peptidoglycan and between N-acetyl-D-glucosamine residues in chitodextrins.. Functionally, lysozymes have primarily a bacteriolytic function; those in tissues and body fluids are associated with the monocyte-macrophage system and enhance the activity of immunoagents. The protein is Lysozyme C-3 (LYZ3) of Bos taurus (Bovine).